The chain runs to 380 residues: Chorismate synthase (380 aa).

Arg-47 provides a ligand contact to NADP(+). FMN is bound by residues Arg-124–Ser-126, Gly-288, Lys-303–Thr-307, and Arg-329.

Belongs to the chorismate synthase family. As to quaternary structure, homotetramer. The cofactor is FMNH2.

It carries out the reaction 5-O-(1-carboxyvinyl)-3-phosphoshikimate = chorismate + phosphate. The protein operates within metabolic intermediate biosynthesis; chorismate biosynthesis; chorismate from D-erythrose 4-phosphate and phosphoenolpyruvate: step 7/7. In terms of biological role, catalyzes the anti-1,4-elimination of the C-3 phosphate and the C-6 proR hydrogen from 5-enolpyruvylshikimate-3-phosphate (EPSP) to yield chorismate, which is the branch point compound that serves as the starting substrate for the three terminal pathways of aromatic amino acid biosynthesis. This reaction introduces a second double bond into the aromatic ring system. The sequence is that of Chorismate synthase from Leptospira borgpetersenii serovar Hardjo-bovis (strain JB197).